The primary structure comprises 67 residues: SPbeta prophage-derived uncharacterized protein YopZ (67 aa).

A coiled-coil region spans residues 1–40 (MTSEMQLQAQIDVIEKENKELRRRNEELGQTVECQNKQIV). The chain crosses the membrane as a helical span at residues 44 to 66 (WRLLFFASSWIVYGIVSAIKYLW).

It is found in the cell membrane. The chain is SPbeta prophage-derived uncharacterized protein YopZ (yopZ) from Bacillus subtilis (strain 168).